The sequence spans 72 residues: UPF0270 protein Ent638_3781 (72 aa).

The protein belongs to the UPF0270 family.

The protein is UPF0270 protein Ent638_3781 of Enterobacter sp. (strain 638).